Reading from the N-terminus, the 107-residue chain is Ribonuclease P protein component 4 (107 aa).

Cysteine 66, cysteine 69, cysteine 92, and cysteine 95 together coordinate Zn(2+).

The protein belongs to the eukaryotic/archaeal RNase P protein component 4 family. In terms of assembly, consists of a catalytic RNA component and at least 4-5 protein subunits. Zn(2+) is required as a cofactor.

Its subcellular location is the cytoplasm. It carries out the reaction Endonucleolytic cleavage of RNA, removing 5'-extranucleotides from tRNA precursor.. In terms of biological role, part of ribonuclease P, a protein complex that generates mature tRNA molecules by cleaving their 5'-ends. The protein is Ribonuclease P protein component 4 of Methanosarcina acetivorans (strain ATCC 35395 / DSM 2834 / JCM 12185 / C2A).